A 108-amino-acid chain; its full sequence is Small ribosomal subunit protein eS25A (108 aa).

Over residues 1–20 the composition is skewed to low complexity; sequence MPPKQQLSKAAKAAAALAGG. The disordered stretch occupies residues 1–30; that stretch reads MPPKQQLSKAAKAAAALAGGKKSKKKWSKK. N,N-dimethylproline; by NTM1 is present on Pro-2. The span at 21 to 30 shows a compositional bias: basic residues; the sequence is KKSKKKWSKK.

This sequence belongs to the eukaryotic ribosomal protein eS25 family. Component of the small ribosomal subunit (SSU). Mature yeast ribosomes consist of a small (40S) and a large (60S) subunit. The 40S small subunit contains 1 molecule of ribosomal RNA (18S rRNA) and 33 different proteins (encoded by 57 genes). The large 60S subunit contains 3 rRNA molecules (25S, 5.8S and 5S rRNA) and 46 different proteins (encoded by 81 genes).

It is found in the cytoplasm. Its function is as follows. Component of the ribosome, a large ribonucleoprotein complex responsible for the synthesis of proteins in the cell. The small ribosomal subunit (SSU) binds messenger RNAs (mRNAs) and translates the encoded message by selecting cognate aminoacyl-transfer RNA (tRNA) molecules. The large subunit (LSU) contains the ribosomal catalytic site termed the peptidyl transferase center (PTC), which catalyzes the formation of peptide bonds, thereby polymerizing the amino acids delivered by tRNAs into a polypeptide chain. The nascent polypeptides leave the ribosome through a tunnel in the LSU and interact with protein factors that function in enzymatic processing, targeting, and the membrane insertion of nascent chains at the exit of the ribosomal tunnel. The chain is Small ribosomal subunit protein eS25A from Saccharomyces cerevisiae (strain ATCC 204508 / S288c) (Baker's yeast).